The primary structure comprises 685 residues: Putative mannosyltransferase YycA (685 aa).

The next 6 helical transmembrane spans lie at 6 to 26 (FDAA…YHIW), 68 to 88 (VLWI…SVII), 109 to 129 (FGVG…IAVA), 154 to 174 (AVKQ…GLAF), 176 to 196 (MKMM…LIAS), and 204 to 224 (IGSL…WAIA). The interval 269–347 (MNAAGGGNMQ…GGGGGKSVNM (79 aa)) is disordered. Residues 277–286 (MQNQDNMQAP) are compositionally biased toward polar residues. Residues 287 to 303 (NGNGSSFSQNGNQSFGN) are compositionally biased toward low complexity. Positions 318 to 343 (LNGGGGTPPTGGNGPGNGGPGGGGGK) are enriched in gly residues. 7 helical membrane-spanning segments follow: residues 363-383 (LSGQ…GAII), 399-419 (TLFW…AGFF), 422-442 (YYLI…WYTM), 455-475 (YLLP…LSAY), 479-499 (IGSV…LALL), 513-533 (IISL…PLLY), and 573-593 (TGEE…YIIY). The tract at residues 652–685 (TSDEYSGSSSSTNSVQGMRRGPGGESQQTLYLVE) is disordered. A compositionally biased stretch (low complexity) spans 654-665 (DEYSGSSSSTNS). Over residues 676–685 (ESQQTLYLVE) the composition is skewed to polar residues.

The protein belongs to the glycosyltransferase 39 family.

The protein resides in the cell membrane. In Bacillus subtilis (strain 168), this protein is Putative mannosyltransferase YycA (yycA).